We begin with the raw amino-acid sequence, 261 residues long: Cytochrome c oxidase subunit 3 (261 aa).

The Mitochondrial matrix portion of the chain corresponds to 1 to 15 (MTHQTHAYHTVNPSP). A helical transmembrane segment spans residues 16–34 (WPLTGALSALLMTSGLIMW). Topologically, residues 35-40 (FHFNSP) are mitochondrial intermembrane. The chain crosses the membrane as a helical span at residues 41–66 (LLLVLGLTTNFLTMYQWWRDIIREST). At 67–72 (FQGHHT) the chain is on the mitochondrial matrix side. The chain crosses the membrane as a helical span at residues 73-105 (TIVQKGLRYGMILFIVSEVFFFAGFFWAFYHSS). Topologically, residues 106–128 (LAPTPELGGCWPPTGINPLNPLE) are mitochondrial intermembrane. A helical membrane pass occupies residues 129-152 (VPLLNTSVLLASGVSITWAHHSLM). Topologically, residues 153–155 (EGH) are mitochondrial matrix. Residues 156 to 183 (RKHMLQALFITIALGVYFTLLQASEYYE) form a helical membrane-spanning segment. The Mitochondrial intermembrane segment spans residues 184 to 190 (APFTISD). The helical transmembrane segment at 191-223 (GIYGSTFFVATGFHGLHVIIGSSFLIVCFMRQL) threads the bilayer. Topologically, residues 224–232 (KFHFTSSHH) are mitochondrial matrix. The chain crosses the membrane as a helical span at residues 233–256 (FGFEAAAWYWHFVDVVWLFLYVSI). The Mitochondrial intermembrane segment spans residues 257–261 (YWWGS).

This sequence belongs to the cytochrome c oxidase subunit 3 family. As to quaternary structure, component of the cytochrome c oxidase (complex IV, CIV), a multisubunit enzyme composed of 14 subunits. The complex is composed of a catalytic core of 3 subunits MT-CO1, MT-CO2 and MT-CO3, encoded in the mitochondrial DNA, and 11 supernumerary subunits COX4I, COX5A, COX5B, COX6A, COX6B, COX6C, COX7A, COX7B, COX7C, COX8 and NDUFA4, which are encoded in the nuclear genome. The complex exists as a monomer or a dimer and forms supercomplexes (SCs) in the inner mitochondrial membrane with NADH-ubiquinone oxidoreductase (complex I, CI) and ubiquinol-cytochrome c oxidoreductase (cytochrome b-c1 complex, complex III, CIII), resulting in different assemblies (supercomplex SCI(1)III(2)IV(1) and megacomplex MCI(2)III(2)IV(2)).

Its subcellular location is the mitochondrion inner membrane. It carries out the reaction 4 Fe(II)-[cytochrome c] + O2 + 8 H(+)(in) = 4 Fe(III)-[cytochrome c] + 2 H2O + 4 H(+)(out). Its function is as follows. Component of the cytochrome c oxidase, the last enzyme in the mitochondrial electron transport chain which drives oxidative phosphorylation. The respiratory chain contains 3 multisubunit complexes succinate dehydrogenase (complex II, CII), ubiquinol-cytochrome c oxidoreductase (cytochrome b-c1 complex, complex III, CIII) and cytochrome c oxidase (complex IV, CIV), that cooperate to transfer electrons derived from NADH and succinate to molecular oxygen, creating an electrochemical gradient over the inner membrane that drives transmembrane transport and the ATP synthase. Cytochrome c oxidase is the component of the respiratory chain that catalyzes the reduction of oxygen to water. Electrons originating from reduced cytochrome c in the intermembrane space (IMS) are transferred via the dinuclear copper A center (CU(A)) of subunit 2 and heme A of subunit 1 to the active site in subunit 1, a binuclear center (BNC) formed by heme A3 and copper B (CU(B)). The BNC reduces molecular oxygen to 2 water molecules using 4 electrons from cytochrome c in the IMS and 4 protons from the mitochondrial matrix. This chain is Cytochrome c oxidase subunit 3 (MT-CO3), found in Dasypus novemcinctus (Nine-banded armadillo).